The sequence spans 73 residues: Putative defensin-like protein 57 (73 aa).

A signal peptide spans 1–25 (MRFTSMIFVLVVILINSLFNFNVLA). 4 disulfide bridges follow: cysteine 37–cysteine 71, cysteine 41–cysteine 64, cysteine 50–cysteine 69, and cysteine 54–cysteine 70.

The protein belongs to the DEFL family.

It is found in the secreted. The protein is Putative defensin-like protein 57 of Arabidopsis thaliana (Mouse-ear cress).